The following is a 443-amino-acid chain: Phosphoglucosamine mutase (443 aa).

Ser-100 (phosphoserine intermediate) is an active-site residue. Residues Ser-100, Asp-239, Asp-241, and Asp-243 each coordinate Mg(2+). A Phosphoserine modification is found at Ser-100.

It belongs to the phosphohexose mutase family. The cofactor is Mg(2+). In terms of processing, activated by phosphorylation.

It carries out the reaction alpha-D-glucosamine 1-phosphate = D-glucosamine 6-phosphate. Catalyzes the conversion of glucosamine-6-phosphate to glucosamine-1-phosphate. This chain is Phosphoglucosamine mutase, found in Shewanella loihica (strain ATCC BAA-1088 / PV-4).